The sequence spans 330 residues: MNENLNGILNVYKEAGWTSFDVVAKLRCILKTKKIGHGGTLDPSVTGVLPIAVGKSTRLLEYMEAAGKIYEGQVTIGFSTETEDADGAIVNQTPVKNNLTESEIDSAMSRFVGKIKQIPPMYSAVKINGKKLYEYARAGQTIERPAREITIKSFVRTSPIDWNKEEGLVTFSFKVECSKGTYVRTLAVDLADSLGYAGHMSKLQRTASNGLLIKDAIKLSKIEEIQESGKLSTILYPAEYAVSDLPRVNLTTVQFDMARVGKKFAQSDWTNEVETADSSVNKTKQQEYLLTDLSLLTTEKFAAFYNDKLVAVYMKHPEKEGIWKPNKVLV.

The Nucleophile role is filled by D42.

The protein belongs to the pseudouridine synthase TruB family. Type 1 subfamily.

The enzyme catalyses uridine(55) in tRNA = pseudouridine(55) in tRNA. Functionally, responsible for synthesis of pseudouridine from uracil-55 in the psi GC loop of transfer RNAs. The protein is tRNA pseudouridine synthase B of Lactococcus lactis subsp. cremoris (strain SK11).